The chain runs to 126 residues: Fluoride-specific ion channel FluC 2 (126 aa).

Transmembrane regions (helical) follow at residues 5-25, 44-64, 68-88, and 99-119; these read TALT…GSVL, GTLT…GLAL, AALL…TWML, and MVSA…AALL. Positions 78 and 81 each coordinate Na(+).

It belongs to the fluoride channel Fluc/FEX (TC 1.A.43) family.

The protein localises to the cell membrane. It catalyses the reaction fluoride(in) = fluoride(out). With respect to regulation, na(+) is not transported, but it plays an essential structural role and its presence is essential for fluoride channel function. Fluoride-specific ion channel. Important for reducing fluoride concentration in the cell, thus reducing its toxicity. This is Fluoride-specific ion channel FluC 2 from Mycobacterium bovis (strain ATCC BAA-935 / AF2122/97).